The sequence spans 316 residues: Pantothenate kinase (316 aa).

95 to 102 contacts ATP; that stretch reads GSVAVGKS.

This sequence belongs to the prokaryotic pantothenate kinase family.

The protein localises to the cytoplasm. The catalysed reaction is (R)-pantothenate + ATP = (R)-4'-phosphopantothenate + ADP + H(+). It functions in the pathway cofactor biosynthesis; coenzyme A biosynthesis; CoA from (R)-pantothenate: step 1/5. This is Pantothenate kinase from Enterobacter sp. (strain 638).